Reading from the N-terminus, the 968-residue chain is Translation initiation factor IF-2 (968 aa).

Over residues 51–76 the composition is skewed to low complexity; sequence PAAGASKSEAPAAAPKAPASPAATRP. Positions 51–369 are disordered; that stretch reads PAAGASKSEA…GVSVPRGDGN (319 aa). Over residues 77–87 the composition is skewed to pro residues; sequence APAPGPAAPKA. Residues 93–102 are compositionally biased toward low complexity; that stretch reads EAPAAASAPS. Residues 103–112 show a composition bias toward pro residues; it reads APAPAAPAPA. Low complexity-rich tracts occupy residues 113–122, 128–170, and 239–254; these read APAAAASAPS, APST…GNNP, and GARPGAPRPAGAPGAR. The segment covering 281–336 has biased composition (gly residues); the sequence is GRPGGGGRGPGRPGGAPGTGGAPGAGGGAPAGGGFGKGGRGRGGTQGAFGKGGAGR. Residues 337 to 346 are compositionally biased toward basic residues; the sequence is GKQRKSKRAK. The region spanning 461-632 is the tr-type G domain; that stretch reads ARPPVVTVMG…AVLLTADAAL (172 aa). Residues 470–477 are G1; that stretch reads GHVDHGKT. 470–477 is a binding site for GTP; it reads GHVDHGKT. Residues 495–499 are G2; that stretch reads GITQH. A G3 region spans residues 520–523; sequence DTPG. GTP contacts are provided by residues 520 to 524 and 574 to 577; these read DTPGH and NKID. The tract at residues 574–577 is G4; it reads NKID. Positions 610–612 are G5; it reads SAR.

It belongs to the TRAFAC class translation factor GTPase superfamily. Classic translation factor GTPase family. IF-2 subfamily.

It is found in the cytoplasm. Functionally, one of the essential components for the initiation of protein synthesis. Protects formylmethionyl-tRNA from spontaneous hydrolysis and promotes its binding to the 30S ribosomal subunits. Also involved in the hydrolysis of GTP during the formation of the 70S ribosomal complex. The chain is Translation initiation factor IF-2 from Arthrobacter sp. (strain FB24).